The primary structure comprises 546 residues: ATP synthase subunit alpha (546 aa).

172-179 (GDRKTGKT) is an ATP binding site. Composition is skewed to polar residues over residues 511–520 (FRTTEGNNLG) and 536–546 (TELNVSRKTAK). Positions 511–546 (FRTTEGNNLGTEAPVDPLAADDVNKTELNVSRKTAK) are disordered.

Belongs to the ATPase alpha/beta chains family. In terms of assembly, F-type ATPases have 2 components, CF(1) - the catalytic core - and CF(0) - the membrane proton channel. CF(1) has five subunits: alpha(3), beta(3), gamma(1), delta(1), epsilon(1). CF(0) has three main subunits: a(1), b(2) and c(9-12). The alpha and beta chains form an alternating ring which encloses part of the gamma chain. CF(1) is attached to CF(0) by a central stalk formed by the gamma and epsilon chains, while a peripheral stalk is formed by the delta and b chains.

The protein localises to the cell membrane. It catalyses the reaction ATP + H2O + 4 H(+)(in) = ADP + phosphate + 5 H(+)(out). Functionally, produces ATP from ADP in the presence of a proton gradient across the membrane. The alpha chain is a regulatory subunit. This chain is ATP synthase subunit alpha, found in Corynebacterium aurimucosum (strain ATCC 700975 / DSM 44827 / CIP 107346 / CN-1) (Corynebacterium nigricans).